Consider the following 333-residue polypeptide: uncharacterized protein (333 aa).

It to bacterial alkanal monooxygenase alpha and beta chains.

This is an uncharacterized protein from Bacillus subtilis (strain 168).